The following is a 297-amino-acid chain: Lipoyl synthase (297 aa).

[4Fe-4S] cluster is bound by residues Cys37, Cys42, Cys48, Cys63, Cys67, Cys70, and Ser276. In terms of domain architecture, Radical SAM core spans 49-265; sequence WSRKHATVMI…ERIAKTKGFL (217 aa).

The protein belongs to the radical SAM superfamily. Lipoyl synthase family. It depends on [4Fe-4S] cluster as a cofactor.

Its subcellular location is the cytoplasm. The catalysed reaction is [[Fe-S] cluster scaffold protein carrying a second [4Fe-4S](2+) cluster] + N(6)-octanoyl-L-lysyl-[protein] + 2 oxidized [2Fe-2S]-[ferredoxin] + 2 S-adenosyl-L-methionine + 4 H(+) = [[Fe-S] cluster scaffold protein] + N(6)-[(R)-dihydrolipoyl]-L-lysyl-[protein] + 4 Fe(3+) + 2 hydrogen sulfide + 2 5'-deoxyadenosine + 2 L-methionine + 2 reduced [2Fe-2S]-[ferredoxin]. It participates in protein modification; protein lipoylation via endogenous pathway; protein N(6)-(lipoyl)lysine from octanoyl-[acyl-carrier-protein]: step 2/2. Its function is as follows. Catalyzes the radical-mediated insertion of two sulfur atoms into the C-6 and C-8 positions of the octanoyl moiety bound to the lipoyl domains of lipoate-dependent enzymes, thereby converting the octanoylated domains into lipoylated derivatives. The polypeptide is Lipoyl synthase (Rickettsia typhi (strain ATCC VR-144 / Wilmington)).